The primary structure comprises 734 residues: MSDKDRIAQLLRELEEAKARVEEAKAREAQERCEKERLQLEHRKTTFLEYLRNCHRHLYNALRLTDTSRSSTGYTKVVGKYYPKRLRPWTNFANVLHPRYFDLVQKICGQRQLFEPASTTKNLGTIISDHLAGNEKAIDRFEVDAVERPVQAILKVLATHEEAGKAYRCPEFRFSANLRELTQEDDGSSGADDNTSDGSLERRQQAGPNKRPTSKRKYICSNRQPDGVGIRMQPGGGQTQAFIYDYKAAHKVAIEHVRSATAKEHLFHEVVARINDNKLSRDKEVQRREQAEAFIAMALTQVFDYMITYGVSYGYVAAGRCLLLLYVDRDDWQTLYCHPCLPADDVGEPTNDWTDRLSHTAVAQLVSFCLSSFQSEALEGQSLETALSVANATLKTWSESYADVAYLGLEPAELSSAPSSQNTDISEYTSKAKPTGRNVALRSQSSCKPAAVLPQGNEHDEHDEDHSEPGASRSRLAANKRKRGPSSGGEDEDIAMADPEPTRQYCTQACLLGLKRGKDLDENCPNVSLHRFDGSSRHPVNAHRFTDMVKQQLLLSPYKGCRMVDFWGKRGAMGWLFKLELFPYGYTFVGKGTLEDRLSRLEHEGRVYARLDHLQGDVVPVHLGLVRLDRGYILPGLEFVVYMMLMSWAGQTPSASMADAETLKRESLTAIWSEGVDHGDDNRANYLWNAERCRIMIIDFDRARLFPPLKPRAVSRLSKPKRERGNRSRHQIRT.

Residues 4–41 (KDRIAQLLRELEEAKARVEEAKAREAQERCEKERLQLE) adopt a coiled-coil conformation. 2 disordered regions span residues 180–222 (ELTQ…ICSN) and 414–499 (LSSA…MADP). Positions 416 to 429 (SAPSSQNTDISEYT) are enriched in polar residues. Over residues 457 to 468 (NEHDEHDEDHSE) the composition is skewed to basic and acidic residues.

Its subcellular location is the cytoplasm. It is found in the nucleus. Functionally, promotes unequal transmission of alleles from the parental zygote to progeny spores by acting as poison/antidote system, leading to poisoning of progeny that do not inherit the allele. May possess DNA nuclease activity that leads to spore killing, and a kinase activity that confers resistance to the nuclease activity. Can suppress meiotic drive by the P.anserina SPOK2, SPOK3 and SPOK4 proteins. The polypeptide is Meiotic driver SPOK1 (Podospora comata).